Reading from the N-terminus, the 338-residue chain is Solute carrier family 35 member G3 (338 aa).

A disordered region spans residues 1-24 (MAGSHPYFNQPDSTHPSPPSAPPS). The next 9 helical transmembrane spans lie at 37–57 (TSGLLVALLGGGLPAGFVGPL), 67–87 (LPSLELLIWRCLFHLPIALLL), 105–125 (FFCALLNILSIGCAYSAVQVV), 160–180 (CGLLGCILGLIIIVGPGLWTL), 185–205 (TGVYTALGYVEAFLGGLALSL), 221–241 (TVAFLSGLVGLLGSVPGLFVL), 250–270 (LLSWSCVGAVGILALVSFTCV), 281–301 (LVCAVLHSEVVVALILQYYML), and 305–325 (VAPSDIVAAGVVLGSIAIITA). The EamA 1 domain maps to 49 to 174 (LPAGFVGPLS…CILGLIIIVG (126 aa)). The EamA 2 domain maps to 272–325 (YAVTKAHPALVCAVLHSEVVVALILQYYMLHETVAPSDIVAAGVVLGSIAIITA).

The protein belongs to the SLC35G solute transporter family. As to expression, expressed in testis.

The protein localises to the membrane. The sequence is that of Solute carrier family 35 member G3 (SLC35G3) from Homo sapiens (Human).